The chain runs to 311 residues: Sulfate adenylyltransferase subunit 2 (311 aa).

Belongs to the PAPS reductase family. CysD subfamily. As to quaternary structure, heterodimer composed of CysD, the smaller subunit, and CysN.

The enzyme catalyses sulfate + ATP + H(+) = adenosine 5'-phosphosulfate + diphosphate. It functions in the pathway sulfur metabolism; hydrogen sulfide biosynthesis; sulfite from sulfate: step 1/3. In terms of biological role, with CysN forms the ATP sulfurylase (ATPS) that catalyzes the adenylation of sulfate producing adenosine 5'-phosphosulfate (APS) and diphosphate, the first enzymatic step in sulfur assimilation pathway. APS synthesis involves the formation of a high-energy phosphoric-sulfuric acid anhydride bond driven by GTP hydrolysis by CysN coupled to ATP hydrolysis by CysD. This Methylobacterium sp. (strain 4-46) protein is Sulfate adenylyltransferase subunit 2.